The primary structure comprises 717 residues: MSRRSQRLTRYSQGDDDGSSSSGGSSVAGSQSTLFKDSPLRTLKRKSSNMKRLSPAPQLGPSSDAHTSYYSESLVHESWFPPRSSLEELHGDANWGEDLRVRRRRGTGGSESSRASGLVGRKATEDFLGSSSGYSSEDDYVGYSDVDQQSSSSRLRSAVSRAGSLLWMVATSPGRLFRLLYWWAGTTWYRLTTAASLLDVFVLTRRFSSLKTFLWFLLPLLLLTCLTYGAWYFYPYGLQTFHPALVSWWAAKDSRRPDEGWEARDSSPHFQAEQRVMSRVHSLERRLEALAAEFSSNWQKEAMRLERLELRQGAPGQGGGGGLSHEDTLALLEGLVSRREAALKEDFRRETAARIQEELSALRAEHQQDSEDLFKKIVRASQESEARIQQLKSEWQSMTQESFQESSVKELRRLEDQLAGLQQELAALALKQSSVAEEVGLLPQQIQAVRDDVESQFPAWISQFLARGGGGRVGLLQREEMQAQLRELESKILTHVAEMQGKSAREAAASLSLTLQKEGVIGVTEEQVHHIVKQALQRYSEDRIGLADYALESGGASVISTRCSETYETKTALLSLFGIPLWYHSQSPRVILQPDVHPGNCWAFQGPQGFAVVRLSARIRPTAVTLEHVPKALSPNSTISSAPKDFAIFGFDEDLQQEGTLLGKFTYDQDGEPIQTFHFQAPTMATYQVVELRILTNWGHPEYTCIYRFRVHGEPAH.

The interval 1–66 is disordered; sequence MSRRSQRLTR…PQLGPSSDAH (66 aa). The segment at 1–139 is LMNA-binding; that stretch reads MSRRSQRLTR…SSSGYSSEDD (139 aa). Residues 1 to 212 lie on the Nuclear side of the membrane; the sequence is MSRRSQRLTR…LTRRFSSLKT (212 aa). At Ser-12 the chain carries Phosphoserine. The span at 19–32 shows a compositional bias: low complexity; that stretch reads SSSSGGSSVAGSQS. Residues Ser-38 and Ser-54 each carry the phosphoserine modification. Thr-107 carries the post-translational modification Phosphothreonine. A phosphoserine mark is found at Ser-110, Ser-113, Ser-116, and Ser-136. A helical transmembrane segment spans residues 213-233; it reads FLWFLLPLLLLTCLTYGAWYF. Topologically, residues 234–717 are perinuclear space; the sequence is YPYGLQTFHP…RFRVHGEPAH (484 aa). Coiled coils occupy residues 273–296, 348–440, and 475–506; these read EQRV…EFSS, RRET…EEVG, and LLQR…SARE. Positions 507 to 717 are sufficient for interaction with SYNE1 and SYNE2; sequence AAASLSLTLQ…RFRVHGEPAH (211 aa). In terms of domain architecture, SUN spans 555-716; the sequence is GASVISTRCS…YRFRVHGEPA (162 aa). A disulfide bridge connects residues Cys-601 and Cys-705. Asn-636 carries an N-linked (GlcNAc...) asparagine glycan.

As to quaternary structure, core component of the LINC complex which is composed of inner nuclear membrane SUN domain-containing proteins coupled to outer nuclear membrane KASH domain-containing nesprins. SUN and KASH domain-containing proteins seem to bind each other promiscuously; however, differentially expression of LINC complex constituents is giving rise to specific assemblies. At least SUN1/2-containing core LINC complexes are proposed to be hexameric composed of three protomers of each KASH and SUN domain-containing protein. Interacts with SYNE2; the SUN2:SYNE2/KASH2 LINC complex is a heterohexamer; the homotrimeric cloverleave-like conformation of the SUN domain is a prerequisite for LINC complex formation in which three separate SYNE2/KASH2 peptides bind at the interface of adjacent SUN domains. Component of a probable SUN2:KASH5 LINC complex. Interacts with SYNE1 and SYNE3; probably forming respective LINC complexes. Interacts with A-type lamin. Interaction with lamins B1 and C is hardly detectable. Interacts with EMD and RAB5A. Interacts with TMEM43. Interacts with TMEM201. In terms of processing, the disulfide bond with SYNE2 is required for stability of the SUN2:SYNE2/KASH2 LINC complex under tensile forces though not required for the interaction. The disulfide bond is proposed to be conserved in LINC complexes involved in force transmission. As to expression, widely expressed. Highly expressed in heart, lung and muscle. Weakly expressed in fetal heart. Slightly overexpressed in some heart tissues form patients with congenital heart defects.

It is found in the nucleus inner membrane. The protein resides in the nucleus envelope. It localises to the endosome membrane. As a component of the LINC (LInker of Nucleoskeleton and Cytoskeleton) complex, involved in the connection between the nuclear lamina and the cytoskeleton. The nucleocytoplasmic interactions established by the LINC complex play an important role in the transmission of mechanical forces across the nuclear envelope and in nuclear movement and positioning. Specifically, SYNE2 and SUN2 assemble in arrays of transmembrane actin-associated nuclear (TAN) lines which are bound to F-actin cables and couple the nucleus to retrograde actin flow during actin-dependent nuclear movement. Required for interkinetic nuclear migration (INM) and essential for nucleokinesis and centrosome-nucleus coupling during radial neuronal migration in the cerebral cortex and during glial migration. Required for nuclear migration in retinal photoreceptor progenitors implicating association with cytoplasmic dynein-dynactin and kinesin motor complexes, and probably B-type lamins; SUN1 and SUN2 seem to act redundantly. The SUN1/2:KASH5 LINC complex couples telomeres to microtubules during meiosis; SUN1 and SUN2 seem to act at least partial redundantly. Anchors chromosome movement in the prophase of meiosis and is involved in selective gene expression of coding and non-coding RNAs needed for gametogenesis. Required for telomere attachment to nuclear envelope and gametogenesis. May also function on endocytic vesicles as a receptor for RAB5-GDP and participate in the activation of RAB5. In Homo sapiens (Human), this protein is SUN domain-containing protein 2.